Consider the following 721-residue polypeptide: Long-chain-fatty-acid--CoA ligase ACSBG1 (721 aa).

Residues 1–64 are disordered; it reads MPRGSEAGYC…SHGLELSAPE (64 aa). Residues 26–52 are compositionally biased toward polar residues; the sequence is QQGASLGTSQDNSQTSSLIDGQTLSKE. Phosphoserine is present on residues S34, S50, S53, and S70. ATP-binding positions include 279–287, 469–474, D547, and R562; these read TSGTTGNPK and AGYGLS. Y655 carries the phosphotyrosine modification. Residue K698 participates in ATP binding.

It belongs to the ATP-dependent AMP-binding enzyme family. Bubblegum subfamily. In terms of tissue distribution, mainly expressed in brain. Also expressed in adrenal gland and testis. In brain, it is present in cerebral cortical and cerebellar neurons and in steroidogenic cells of the adrenal gland, testis and ovary (at protein level).

It localises to the cytoplasm. Its subcellular location is the cytoplasmic vesicle. The protein resides in the microsome. The protein localises to the endoplasmic reticulum. It is found in the cell membrane. It carries out the reaction a long-chain fatty acid + ATP + CoA = a long-chain fatty acyl-CoA + AMP + diphosphate. It catalyses the reaction (E)-hexadec-2-enoate + ATP + CoA = (2E)-hexadecenoyl-CoA + AMP + diphosphate. The catalysed reaction is hexadecanoate + ATP + CoA = hexadecanoyl-CoA + AMP + diphosphate. In terms of biological role, catalyzes the conversion of fatty acids such as long-chain and very long-chain fatty acids to their active form acyl-CoAs for both synthesis of cellular lipids, and degradation via beta-oxidation. Can activate diverse saturated, monosaturated and polyunsaturated fatty acids. In Mus musculus (Mouse), this protein is Long-chain-fatty-acid--CoA ligase ACSBG1.